A 310-amino-acid polypeptide reads, in one-letter code: Glycerol-3-phosphate dehydrogenase [NAD(P)+] (310 aa).

NADPH is bound by residues Trp14, Arg34, Arg35, and Lys82. Sn-glycerol 3-phosphate contacts are provided by Lys82 and Gly110. An NADPH-binding site is contributed by Ser114. Residues Lys165, Asp218, Ser228, Arg229, and Asn230 each coordinate sn-glycerol 3-phosphate. Lys165 acts as the Proton acceptor in catalysis. Arg229 serves as a coordination point for NADPH. Glu255 is a binding site for NADPH.

It belongs to the NAD-dependent glycerol-3-phosphate dehydrogenase family.

The protein localises to the cytoplasm. The enzyme catalyses sn-glycerol 3-phosphate + NAD(+) = dihydroxyacetone phosphate + NADH + H(+). The catalysed reaction is sn-glycerol 3-phosphate + NADP(+) = dihydroxyacetone phosphate + NADPH + H(+). The protein operates within membrane lipid metabolism; glycerophospholipid metabolism. Its function is as follows. Catalyzes the reduction of the glycolytic intermediate dihydroxyacetone phosphate (DHAP) to sn-glycerol 3-phosphate (G3P), the key precursor for phospholipid synthesis. This is Glycerol-3-phosphate dehydrogenase [NAD(P)+] from Acaryochloris marina (strain MBIC 11017).